The following is a 203-amino-acid chain: Small ribosomal subunit protein uS4c (203 aa).

The interval 15–43 is disordered; sequence LGSLPGLTSKRPRSGSDLRNQSRSGKRSQ. An S4 RNA-binding domain is found at 89–169; that stretch reads MRLDNILFRL…LPKHLTLHSL (81 aa).

The protein belongs to the universal ribosomal protein uS4 family. As to quaternary structure, part of the 30S ribosomal subunit. Contacts protein S5. The interaction surface between S4 and S5 is involved in control of translational fidelity.

It is found in the plastid. The protein localises to the chloroplast. Its function is as follows. One of the primary rRNA binding proteins, it binds directly to 16S rRNA where it nucleates assembly of the body of the 30S subunit. In terms of biological role, with S5 and S12 plays an important role in translational accuracy. The polypeptide is Small ribosomal subunit protein uS4c (rps4) (Illicium oligandrum (Star anise)).